A 470-amino-acid polypeptide reads, in one-letter code: Nuclear receptor ROR-beta (470 aa).

The nuclear receptor DNA-binding region spans 18-93 (VIPCKICGDK…LGMSRDAVKF (76 aa)). 2 NR C4-type zinc fingers span residues 21-41 (CKIC…CEGC) and 57-81 (CPRQ…LQKC). Basic and acidic residues predominate over residues 104-117 (LYAEVQKHQQRLQE). The segment at 104 to 127 (LYAEVQKHQQRLQEQRQQQSGEAE) is disordered. In terms of domain architecture, NR LBD spans 222 to 460 (EIDRIAQNII…TLFPPLYKEL (239 aa)). Residues 456–461 (LYKELF) carry the AF-2 motif.

This sequence belongs to the nuclear hormone receptor family. NR1 subfamily. In terms of assembly, monomer. Interacts with CRX. Isoform 2 expressed with circadian rhythm in eye and pineal gland. Isoform 1 expressed in retina cortex, thalamus, and hypothalamus.

It localises to the nucleus. The protein resides in the nucleoplasm. Its function is as follows. Nuclear receptor that binds DNA as a monomer to ROR response elements (RORE) containing a single core motif half-site 5'-AGGTCA-3' preceded by a short A-T-rich sequence. Considered to have intrinsic transcriptional activity, have some natural ligands such as all-trans retinoic acid (ATRA) and other retinoids which act as inverse agonists repressing the transcriptional activity. Required for normal postnatal development of rod and cone photoreceptor cells. Modulates rod photoreceptors differentiation at least by inducing the transcription factor NRL-mediated pathway. In cone photoreceptor cells, regulates transcription of OPN1SW. Involved in the regulation of the period length and stability of the circadian rhythm. May control cytoarchitectural patterning of neocortical neurons during development. May act in a dose-dependent manner to regulate barrel formation upon innervation of layer IV neurons by thalamocortical axons. May play a role in the suppression of osteoblastic differentiation through the inhibition of RUNX2 transcriptional activity. In terms of biological role, critical for hindlimb motor control and for the differentiation of amacrine and horizontal cells in the retina. Regulates the expression of PTF1A synergistically with FOXN4. The polypeptide is Nuclear receptor ROR-beta (Rorb) (Rattus norvegicus (Rat)).